We begin with the raw amino-acid sequence, 584 residues long: Chondroitin proteoglycan 1 (584 aa).

The first 17 residues, 1-17 (MTLKPVLLAFLVASAYA), serve as a signal peptide directing secretion. O-linked (Xyl...) (chondroitin sulfate) serine glycosylation occurs at serine 50. 3 Chitin-binding type-2 domains span residues 58–115 (DTDC…QCGG), 211–268 (TKSC…ECTN), and 524–578 (VPAC…ECHQ). 2 cysteine pairs are disulfide-bonded: cysteine 91–cysteine 104 and cysteine 244–cysteine 257. The interval 267–295 (TNGSGNDEGSADETTPESSGEMPYSNGYG) is disordered. N-linked (GlcNAc...) asparagine glycosylation is present at asparagine 268. Cysteine 554 and cysteine 567 are oxidised to a cystine.

As to expression, expressed in the germline.

Required for polar body extrusion during cytokinesis in embryo development. Affects cortical granule size. Has roles in meiotic chromosome segregation, osmotic barrier function and polarization in conjunction with cpg-2. Binds chitin. The polypeptide is Chondroitin proteoglycan 1 (cpg-1) (Caenorhabditis elegans).